A 156-amino-acid chain; its full sequence is 6,7-dimethyl-8-ribityllumazine synthase (156 aa).

Residues F23, 57–59, and 81–83 contribute to the 5-amino-6-(D-ribitylamino)uracil site; these read AYE and AII. Residue 86-87 coordinates (2S)-2-hydroxy-3-oxobutyl phosphate; that stretch reads GT. Residue H89 is the Proton donor of the active site. Position 114 (F114) interacts with 5-amino-6-(D-ribitylamino)uracil. Residue R128 participates in (2S)-2-hydroxy-3-oxobutyl phosphate binding.

It belongs to the DMRL synthase family.

It catalyses the reaction (2S)-2-hydroxy-3-oxobutyl phosphate + 5-amino-6-(D-ribitylamino)uracil = 6,7-dimethyl-8-(1-D-ribityl)lumazine + phosphate + 2 H2O + H(+). It functions in the pathway cofactor biosynthesis; riboflavin biosynthesis; riboflavin from 2-hydroxy-3-oxobutyl phosphate and 5-amino-6-(D-ribitylamino)uracil: step 1/2. Catalyzes the formation of 6,7-dimethyl-8-ribityllumazine by condensation of 5-amino-6-(D-ribitylamino)uracil with 3,4-dihydroxy-2-butanone 4-phosphate. This is the penultimate step in the biosynthesis of riboflavin. The sequence is that of 6,7-dimethyl-8-ribityllumazine synthase from Helicobacter acinonychis (strain Sheeba).